The following is a 153-amino-acid chain: MAATTAPNPLTAYRFLLRATRIAFQGDFTTLHAARAEARKQFDQHRKQGVDTPMRIQHAMETAEILRTNVVQGVKISGAGEEAERYASILVMRRFRGEYEGEDERREKEEAMRELRIHEHIERGDNDSIKTAGKNERVKVAVGKACSNTQSSE.

It belongs to the complex I LYR family. MZM1 subfamily. Interacts with RIP1.

Its subcellular location is the mitochondrion matrix. In terms of biological role, assembly factor required for Rieske Fe-S protein RIP1 incorporation into the cytochrome b-c1 (CIII) complex. Functions as a chaperone, binding to this subunit within the mitochondrial matrix and stabilizing it prior to its translocation and insertion into the late CIII dimeric intermediate within the mitochondrial inner membrane. Modulates the mitochondrial matrix zinc pool. The polypeptide is Mitochondrial zinc maintenance protein 1, mitochondrial (MZM1) (Ajellomyces capsulatus (strain G186AR / H82 / ATCC MYA-2454 / RMSCC 2432) (Darling's disease fungus)).